The chain runs to 120 residues: uncharacterized protein (120 aa).

The tract at residues P80–A99 is disordered.

This is an uncharacterized protein from Goose circovirus (GoCV).